A 469-amino-acid chain; its full sequence is 3-isopropylmalate dehydratase large subunit (469 aa).

Residues Cys349, Cys410, and Cys413 each contribute to the [4Fe-4S] cluster site.

The protein belongs to the aconitase/IPM isomerase family. LeuC type 1 subfamily. As to quaternary structure, heterodimer of LeuC and LeuD. [4Fe-4S] cluster is required as a cofactor.

The catalysed reaction is (2R,3S)-3-isopropylmalate = (2S)-2-isopropylmalate. Its pathway is amino-acid biosynthesis; L-leucine biosynthesis; L-leucine from 3-methyl-2-oxobutanoate: step 2/4. In terms of biological role, catalyzes the isomerization between 2-isopropylmalate and 3-isopropylmalate, via the formation of 2-isopropylmaleate. In Neisseria meningitidis serogroup B (strain ATCC BAA-335 / MC58), this protein is 3-isopropylmalate dehydratase large subunit.